The primary structure comprises 333 residues: Transcription factor TGA2.2 (333 aa).

Positions 1–14 are enriched in polar residues; sequence MADASSRTDTSTVL. Residues 1 to 48 form a disordered region; it reads MADASSRTDTSTVLDTDDKNQMVDGQSGAIVPSNSSDRSDRSDKPMDQ. Basic and acidic residues predominate over residues 37 to 48; that stretch reads DRSDRSDKPMDQ. The 45-residue stretch at 47 to 91 folds into the bZIP domain; it reads DQKVLRRLAQNREAARKSRLRKKAYVQQLESSKLKLASLEQEINK. The basic motif stretch occupies residues 49-69; it reads KVLRRLAQNREAARKSRLRKK. The leucine-zipper stretch occupies residues 75–89; sequence LESSKLKLASLEQEI. The region spanning 114–330 is the DOG1 domain; that stretch reads AMTFDLEYAR…RALSSLWLAR (217 aa).

Belongs to the bZIP family. In terms of assembly, interacts with NPR1/NH1. Interacts with NPR3/NH3.

Its subcellular location is the nucleus. Functionally, transcriptional regulator involved in defense response. This is Transcription factor TGA2.2 from Oryza sativa subsp. japonica (Rice).